The sequence spans 136 residues: Ribonuclease P protein component (136 aa).

It belongs to the RnpA family. In terms of assembly, consists of a catalytic RNA component (M1 or rnpB) and a protein subunit.

The enzyme catalyses Endonucleolytic cleavage of RNA, removing 5'-extranucleotides from tRNA precursor.. RNaseP catalyzes the removal of the 5'-leader sequence from pre-tRNA to produce the mature 5'-terminus. It can also cleave other RNA substrates such as 4.5S RNA. The protein component plays an auxiliary but essential role in vivo by binding to the 5'-leader sequence and broadening the substrate specificity of the ribozyme. This chain is Ribonuclease P protein component, found in Burkholderia mallei (strain NCTC 10247).